The chain runs to 524 residues: Cytochrome P450 monooxygenase drtD (524 aa).

A helical transmembrane segment spans residues 2 to 22; sequence SDTYLVAASGLAVCFFVLYLL. Cys-418 lines the heme pocket.

It belongs to the cytochrome P450 family. The cofactor is heme.

The protein localises to the membrane. Its pathway is secondary metabolite biosynthesis; terpenoid biosynthesis. In terms of biological role, cytochrome P450 monooxygenase; part of the gene cluster that mediates the biosynthesis of various drimane-type sesquiterpene esters, compounds that exhibit diverse biological activities and are widely present in eukaryotes. The pathway begins with the synthesis of the backbone drimenol by the terpene cyclase drtB using farnesyl pyrophosphate (FPP) as substrate. The cytochrome P450 monooxygenase drtD is then responsible for the hydroxylations at C-6, C-9 and C-12, as well as the oxidation of hydroxyl groups at C-6 and C-11 to a ketone and an aldehyde, respectively. Then, the biosynthesis can go in two directions, either the hydroxylated drimenol is further hydroxylated at C-2 and C-3 by an enzyme(s) not associated with the drt cluster, or the FAD-binding oxidoreductase drtC further oxidizes C-11 or C-12 to form the butyrolactone ring. DrtB, drtD and drtC are solely responsible for the formation of the different drimane structures observed during drimane sesquiterpenes biosynthesis. The polyketide synthase drtA synthesizes different lengths (C6 and C8) of PKS chains, which are then oxidized to varying degrees by the short-chain dehydrogenase drtF. Finally, these PKS chains are transferred onto drimane sesquiterpenes by the acyltransferase drtE, forming the sesquiterpene esters. In addition to the different fatty acyl-CoA chains produced by drtA, drtE is also able to use cinnamoyl-CoA as a substrate. This Aspergillus calidoustus protein is Cytochrome P450 monooxygenase drtD.